The following is a 139-amino-acid chain: Putative nickel-responsive regulator (139 aa).

His79, His90, His92, and Cys98 together coordinate Ni(2+).

It belongs to the transcriptional regulatory CopG/NikR family. Requires Ni(2+) as cofactor.

In terms of biological role, transcriptional regulator. The sequence is that of Putative nickel-responsive regulator from Anaeromyxobacter dehalogenans (strain 2CP-C).